We begin with the raw amino-acid sequence, 230 residues long: uncharacterized protein (230 aa).

2 disordered regions span residues 63-90 (TDCQ…KKTI) and 194-230 (KKLE…YKEH). The span at 194–217 (KKLEEREQMDKHPQDRDNKDKEVN) shows a compositional bias: basic and acidic residues.

This is an uncharacterized protein from Caenorhabditis elegans.